The chain runs to 29 residues: U1-pseudomyrmecitoxin-Pt1 subunit SS2 (29 aa).

Belongs to the myrmexin family. In terms of assembly, heterodimer composed of subunit SS2 and subunit LS1 (U1-PSDTX-Pt1e), and heterodimer composed of subunit SS2 and LS2 (U1-PSDTX-Pt1c); disulfide-linked. In terms of tissue distribution, expressed by the venom gland.

Its subcellular location is the secreted. In terms of biological role, this heterodimer may have anti-inflammatory properties, since the myrmexin complex (composed of 6 SS-LS heterodimers) inhibits carrageenin-induced edema in a dose-dependent manner (after subcutaneous injection into rats). The chain is U1-pseudomyrmecitoxin-Pt1 subunit SS2 from Pseudomyrmex triplarinus (Ant).